We begin with the raw amino-acid sequence, 976 residues long: Leucine--tRNA ligase (976 aa).

Residues 1–23 (MTESPTTTPGSTSGAPSGVPSGV) are compositionally biased toward low complexity. The tract at residues 1 to 34 (MTESPTTTPGSTSGAPSGVPSGVNDAESDAPRHR) is disordered. A 'HIGH' region motif is present at residues 86 to 97 (PYPSGEGLHVGH). The 'KMSKS' region motif lies at 745-749 (KIGKS). Lys748 contacts ATP.

The protein belongs to the class-I aminoacyl-tRNA synthetase family.

It is found in the cytoplasm. The enzyme catalyses tRNA(Leu) + L-leucine + ATP = L-leucyl-tRNA(Leu) + AMP + diphosphate. The sequence is that of Leucine--tRNA ligase from Mycobacterium marinum (strain ATCC BAA-535 / M).